A 263-amino-acid polypeptide reads, in one-letter code: Hydroxyacylglutathione hydrolase (263 aa).

The Zn(2+) site is built by His-60, His-62, Asp-64, His-65, His-120, Asp-137, and His-175.

The protein belongs to the metallo-beta-lactamase superfamily. Glyoxalase II family. As to quaternary structure, monomer. Requires Zn(2+) as cofactor.

The catalysed reaction is an S-(2-hydroxyacyl)glutathione + H2O = a 2-hydroxy carboxylate + glutathione + H(+). It participates in secondary metabolite metabolism; methylglyoxal degradation; (R)-lactate from methylglyoxal: step 2/2. Its function is as follows. Thiolesterase that catalyzes the hydrolysis of S-D-lactoyl-glutathione to form glutathione and D-lactic acid. In Shewanella pealeana (strain ATCC 700345 / ANG-SQ1), this protein is Hydroxyacylglutathione hydrolase.